Consider the following 277-residue polypeptide: Urease accessory protein UreD (277 aa).

The protein belongs to the UreD family. In terms of assembly, ureD, UreF and UreG form a complex that acts as a GTP-hydrolysis-dependent molecular chaperone, activating the urease apoprotein by helping to assemble the nickel containing metallocenter of UreC. The UreE protein probably delivers the nickel.

Its subcellular location is the cytoplasm. Required for maturation of urease via the functional incorporation of the urease nickel metallocenter. This chain is Urease accessory protein UreD, found in Rhodopseudomonas palustris (strain BisB18).